A 298-amino-acid polypeptide reads, in one-letter code: Homoserine kinase (298 aa).

An ATP-binding site is contributed by 83–93; sequence PVSRGLGSSST.

Belongs to the GHMP kinase family. Homoserine kinase subfamily.

Its subcellular location is the cytoplasm. It carries out the reaction L-homoserine + ATP = O-phospho-L-homoserine + ADP + H(+). The protein operates within amino-acid biosynthesis; L-threonine biosynthesis; L-threonine from L-aspartate: step 4/5. Its function is as follows. Catalyzes the ATP-dependent phosphorylation of L-homoserine to L-homoserine phosphate. This is Homoserine kinase from Clostridium beijerinckii (strain ATCC 51743 / NCIMB 8052) (Clostridium acetobutylicum).